A 357-amino-acid chain; its full sequence is tRNA-specific 2-thiouridylase MnmA (357 aa).

Residues 7–14 (GLSGGVDS) and L33 each bind ATP. Catalysis depends on C94, which acts as the Nucleophile. C94 and C193 form a disulfide bridge. G119 is an ATP binding site. Residues 143 to 145 (KDQ) form an interaction with tRNA region. The active-site Cysteine persulfide intermediate is the C193. The interval 298–299 (RY) is interaction with tRNA.

The protein belongs to the MnmA/TRMU family.

It is found in the cytoplasm. The enzyme catalyses S-sulfanyl-L-cysteinyl-[protein] + uridine(34) in tRNA + AH2 + ATP = 2-thiouridine(34) in tRNA + L-cysteinyl-[protein] + A + AMP + diphosphate + H(+). Functionally, catalyzes the 2-thiolation of uridine at the wobble position (U34) of tRNA, leading to the formation of s(2)U34. This Synechococcus sp. (strain ATCC 27144 / PCC 6301 / SAUG 1402/1) (Anacystis nidulans) protein is tRNA-specific 2-thiouridylase MnmA.